The following is a 355-amino-acid chain: Elongation factor Ts, mitochondrial (355 aa).

The N-terminal 46 residues, 1 to 46 (MIRSLNFALRNCNKNILINSNKITINNGLLLKKNNFCTQSTSEVKV), are a transit peptide targeting the mitochondrion.

The protein belongs to the EF-Ts family.

Its subcellular location is the mitochondrion. Its function is as follows. Associates with the EF-Tu.GDP complex and induces the exchange of GDP to GTP. It remains bound to the aminoacyl-tRNA.EF-Tu.GTP complex up to the GTP hydrolysis stage on the ribosome. The polypeptide is Elongation factor Ts, mitochondrial (tsfm) (Dictyostelium discoideum (Social amoeba)).